The sequence spans 123 residues: Small ribosomal subunit protein uS13 (123 aa).

The tract at residues 92–123 (RKGLPVRGQKTKTNARTRKGPKKLVGAKKKSK) is disordered.

It belongs to the universal ribosomal protein uS13 family. Part of the 30S ribosomal subunit. Forms a loose heterodimer with protein S19. Forms two bridges to the 50S subunit in the 70S ribosome.

Its function is as follows. Located at the top of the head of the 30S subunit, it contacts several helices of the 16S rRNA. In the 70S ribosome it contacts the 23S rRNA (bridge B1a) and protein L5 of the 50S subunit (bridge B1b), connecting the 2 subunits; these bridges are implicated in subunit movement. Contacts the tRNAs in the A and P-sites. The chain is Small ribosomal subunit protein uS13 from Clostridium kluyveri (strain NBRC 12016).